A 1089-amino-acid chain; its full sequence is Platelet-derived growth factor receptor alpha (1089 aa).

The N-terminal stretch at 1 to 23 is a signal peptide; it reads MGTSHPAFLVLGCLLTGLSLILC. Ig-like C2-type domains follow at residues 24–113, 117–201, 202–306, 319–410, and 414–517; these read QLSL…NELE, IYIY…FQTI, PFNV…KKVT, PTFS…FELL, and PSSI…LKLV. Topologically, residues 24–528 are extracellular; it reads QLSLPSILPN…PTLRSELTVA (505 aa). N-linked (GlcNAc...) asparagine glycans are attached at residues Asn42, Asn76, Asn103, and Asn179. Cys49 and Cys100 are joined by a disulfide. Intrachain disulfides connect Cys150/Cys189 and Cys235/Cys290. Asn353, Asn359, Asn458, and Asn468 each carry an N-linked (GlcNAc...) asparagine glycan. The cysteines at positions 435 and 501 are disulfide-linked. A helical transmembrane segment spans residues 529–549; sequence AAVLVLLVIVIISLIVLVVIW. Residues 550–1089 are Cytoplasmic-facing; sequence KQKPRYEIRW…SSDLVEDSFL (540 aa). Phosphotyrosine; by autocatalysis is present on residues Tyr572 and Tyr574. Positions 593–954 constitute a Protein kinase domain; that stretch reads LVLGRVLGSG…HLSEIVENLL (362 aa). Residues 599-607 and Lys627 contribute to the ATP site; that span reads LGSGAFGKV. 6 positions are modified to phosphotyrosine; by autocatalysis: Tyr720, Tyr731, Tyr742, Tyr754, Tyr762, and Tyr768. The active-site Proton acceptor is Asp818. Residues Tyr849, Tyr988, and Tyr1018 each carry the phosphotyrosine; by autocatalysis modification. The interval 1018 to 1089 is disordered; the sequence is YIIPLPDIDP…SSDLVEDSFL (72 aa). Polar residues predominate over residues 1041–1059; sequence SSQTSEESAIETGSSSSTF. Acidic residues predominate over residues 1065 to 1089; it reads ETIEDIDMMDDIGIDSSDLVEDSFL.

It belongs to the protein kinase superfamily. Tyr protein kinase family. CSF-1/PDGF receptor subfamily. Interacts with homodimeric PDGFA, PDGFB and PDGFC, and with heterodimers formed by PDGFA and PDGFB. Monomer in the absence of bound ligand. Interaction with dimeric PDGFA, PDGFB and/or PDGFC leads to receptor dimerization, where both PDGFRA homodimers and heterodimers with PDGFRB are observed. Interacts (tyrosine phosphorylated) with SHB (via SH2 domain). Interacts (tyrosine phosphorylated) with SHF (via SH2 domain). Interacts (tyrosine phosphorylated) with SRC (via SH2 domain). Interacts (tyrosine phosphorylated) with PIK3R1. Interacts (tyrosine phosphorylated) with PLCG1 (via SH2 domain). Interacts (tyrosine phosphorylated) with CRK, GRB2 and GRB7. Interacts with CD248; this interaction promotes PDGF receptor signaling pathway. As to quaternary structure, (Microbial infection) Interacts with human cytomegalovirus/HHV-5 envelope glycoprotein B/gB. Also interacts with the trimeric complex gH-gL-gO. Trimer-PDGFRA interaction has an inhibitory effect on PDGFRA signaling. In terms of processing, N-glycosylated. Post-translationally, ubiquitinated, leading to its internalization and degradation. Autophosphorylated on tyrosine residues upon ligand binding. Autophosphorylation occurs in trans, i.e. one subunit of the dimeric receptor phosphorylates tyrosine residues on the other subunit. Phosphorylation at Tyr-731 and Tyr-742 is important for interaction with PIK3R1. Phosphorylation at Tyr-720 and Tyr-754 is important for interaction with PTPN11. Phosphorylation at Tyr-762 is important for interaction with CRK. Phosphorylation at Tyr-572 and Tyr-574 is important for interaction with SRC and SRC family members. Phosphorylation at Tyr-988 and Tyr-1018 is important for interaction with PLCG1. In terms of tissue distribution, detected in platelets (at protein level). Widely expressed. Detected in brain, fibroblasts, smooth muscle, heart, and embryo. Expressed in primary and metastatic colon tumors and in normal colon tissue.

The protein resides in the cell membrane. Its subcellular location is the cell projection. The protein localises to the cilium. It is found in the golgi apparatus. It catalyses the reaction L-tyrosyl-[protein] + ATP = O-phospho-L-tyrosyl-[protein] + ADP + H(+). With respect to regulation, present in an inactive conformation in the absence of bound ligand. Binding of PDGFA and/or PDGFB leads to dimerization and activation by autophosphorylation on tyrosine residues. Inhibited by imatinib, nilotinib and sorafenib. Its function is as follows. Tyrosine-protein kinase that acts as a cell-surface receptor for PDGFA, PDGFB and PDGFC and plays an essential role in the regulation of embryonic development, cell proliferation, survival and chemotaxis. Depending on the context, promotes or inhibits cell proliferation and cell migration. Plays an important role in the differentiation of bone marrow-derived mesenchymal stem cells. Required for normal skeleton development and cephalic closure during embryonic development. Required for normal development of the mucosa lining the gastrointestinal tract, and for recruitment of mesenchymal cells and normal development of intestinal villi. Plays a role in cell migration and chemotaxis in wound healing. Plays a role in platelet activation, secretion of agonists from platelet granules, and in thrombin-induced platelet aggregation. Binding of its cognate ligands - homodimeric PDGFA, homodimeric PDGFB, heterodimers formed by PDGFA and PDGFB or homodimeric PDGFC -leads to the activation of several signaling cascades; the response depends on the nature of the bound ligand and is modulated by the formation of heterodimers between PDGFRA and PDGFRB. Phosphorylates PIK3R1, PLCG1, and PTPN11. Activation of PLCG1 leads to the production of the cellular signaling molecules diacylglycerol and inositol 1,4,5-trisphosphate, mobilization of cytosolic Ca(2+) and the activation of protein kinase C. Phosphorylates PIK3R1, the regulatory subunit of phosphatidylinositol 3-kinase, and thereby mediates activation of the AKT1 signaling pathway. Mediates activation of HRAS and of the MAP kinases MAPK1/ERK2 and/or MAPK3/ERK1. Promotes activation of STAT family members STAT1, STAT3 and STAT5A and/or STAT5B. Receptor signaling is down-regulated by protein phosphatases that dephosphorylate the receptor and its down-stream effectors, and by rapid internalization of the activated receptor. The sequence is that of Platelet-derived growth factor receptor alpha (PDGFRA) from Homo sapiens (Human).